The primary structure comprises 239 residues: Carboxy-S-adenosyl-L-methionine synthase (239 aa).

S-adenosyl-L-methionine-binding positions include Tyr-35, 64-66, 88-89, and Arg-195; these read GCS and DN.

This sequence belongs to the class I-like SAM-binding methyltransferase superfamily. Cx-SAM synthase family. As to quaternary structure, homodimer.

It carries out the reaction prephenate + S-adenosyl-L-methionine = carboxy-S-adenosyl-L-methionine + 3-phenylpyruvate + H2O. In terms of biological role, catalyzes the conversion of S-adenosyl-L-methionine (SAM) to carboxy-S-adenosyl-L-methionine (Cx-SAM). The polypeptide is Carboxy-S-adenosyl-L-methionine synthase (Helicobacter pylori (strain G27)).